Consider the following 278-residue polypeptide: HTH-type transcriptional activator RhaS (278 aa).

In terms of domain architecture, HTH araC/xylS-type spans 174 to 272 (NLLLAWLEDH…NWSPRDIRQG (99 aa)). DNA-binding regions (H-T-H motif) lie at residues 191–212 (DAVADQFSLSLRTLHRQLKQQT) and 239–262 (VTDIAYRCGFSDSNHFSTLFRREF).

Binds DNA as a dimer.

It is found in the cytoplasm. Activates expression of the rhaBAD and rhaT operons. This Escherichia coli O127:H6 (strain E2348/69 / EPEC) protein is HTH-type transcriptional activator RhaS.